A 196-amino-acid polypeptide reads, in one-letter code: Superoxide dismutase [Fe] (196 aa).

Fe cation-binding residues include His-20, His-68, Asp-157, and His-161.

Belongs to the iron/manganese superoxide dismutase family. In terms of assembly, homotetramer. The cofactor is Fe cation.

It catalyses the reaction 2 superoxide + 2 H(+) = H2O2 + O2. Its function is as follows. Destroys superoxide anion radicals which are normally produced within the cells and which are toxic to biological systems. The protein is Superoxide dismutase [Fe] of Tetrahymena pyriformis.